The primary structure comprises 76 residues: cAMP-dependent protein kinase inhibitor alpha (76 aa).

Thr2 carries the post-translational modification N-acetylthreonine. The segment at 49-76 (KTEGEEDAQRNSTEQSGEAQGEAAKSES) is disordered.

The protein belongs to the PKI family.

Extremely potent competitive inhibitor of cAMP-dependent protein kinase activity, this protein interacts with the catalytic subunit of the enzyme after the cAMP-induced dissociation of its regulatory chains. This Bos taurus (Bovine) protein is cAMP-dependent protein kinase inhibitor alpha (PKIA).